Here is a 126-residue protein sequence, read N- to C-terminus: MSKLYFTEDHEWVSVDDDGIGTIGITDYAQKQLGDVVFVELPEIGREIERGGDAAVVESVKAASEVYSPVSGEVVEANDSLPEAPGQVNTDALGDGWFFKVRLSEPAELDELMDQEAYDAFVGELD.

One can recognise a Lipoyl-binding domain in the interval 20–102; sequence IGTIGITDYA…LGDGWFFKVR (83 aa). K61 is subject to N6-lipoyllysine.

It belongs to the GcvH family. As to quaternary structure, the glycine cleavage system is composed of four proteins: P, T, L and H. (R)-lipoate is required as a cofactor.

In terms of biological role, the glycine cleavage system catalyzes the degradation of glycine. The H protein shuttles the methylamine group of glycine from the P protein to the T protein. In Rhodospirillum rubrum (strain ATCC 11170 / ATH 1.1.1 / DSM 467 / LMG 4362 / NCIMB 8255 / S1), this protein is Glycine cleavage system H protein.